The following is a 705-amino-acid chain: Elongation factor G (705 aa).

One can recognise a tr-type G domain in the interval 8 to 294 (ELYRNFGIMA…SVIDYLPSPL (287 aa)). Residues 17 to 24 (AHIDAGKT), 92 to 96 (DTPGH), and 146 to 149 (NKMD) each bind GTP.

It belongs to the TRAFAC class translation factor GTPase superfamily. Classic translation factor GTPase family. EF-G/EF-2 subfamily.

It localises to the cytoplasm. Its function is as follows. Catalyzes the GTP-dependent ribosomal translocation step during translation elongation. During this step, the ribosome changes from the pre-translocational (PRE) to the post-translocational (POST) state as the newly formed A-site-bound peptidyl-tRNA and P-site-bound deacylated tRNA move to the P and E sites, respectively. Catalyzes the coordinated movement of the two tRNA molecules, the mRNA and conformational changes in the ribosome. The protein is Elongation factor G of Cereibacter sphaeroides (strain KD131 / KCTC 12085) (Rhodobacter sphaeroides).